A 336-amino-acid polypeptide reads, in one-letter code: Holliday junction branch migration complex subunit RuvB (336 aa).

Basic and acidic residues predominate over residues 1–11; that stretch reads MDDDKLLSGDK. The disordered stretch occupies residues 1–21; that stretch reads MDDDKLLSGDKADDEEASLEK. Residues 1 to 184 form a large ATPase domain (RuvB-L) region; it reads MDDDKLLSGD…FGIVEHMAYY (184 aa). ATP contacts are provided by residues Leu-23, Arg-24, Gly-65, Lys-68, Thr-69, Thr-70, 131–133, Arg-174, Tyr-184, and Arg-221; that span reads EDF. Thr-69 serves as a coordination point for Mg(2+). A small ATPAse domain (RuvB-S) region spans residues 185–255; it reads EVADLEDIVK…IVARSLTYLR (71 aa). The segment at 258–336 is head domain (RuvB-H); the sequence is DAGLDETDNK…HLGFPYPENK (79 aa). DNA contacts are provided by Arg-313 and Arg-318.

Belongs to the RuvB family. In terms of assembly, homohexamer. Forms an RuvA(8)-RuvB(12)-Holliday junction (HJ) complex. HJ DNA is sandwiched between 2 RuvA tetramers; dsDNA enters through RuvA and exits via RuvB. An RuvB hexamer assembles on each DNA strand where it exits the tetramer. Each RuvB hexamer is contacted by two RuvA subunits (via domain III) on 2 adjacent RuvB subunits; this complex drives branch migration. In the full resolvosome a probable DNA-RuvA(4)-RuvB(12)-RuvC(2) complex forms which resolves the HJ.

The protein resides in the cytoplasm. It carries out the reaction ATP + H2O = ADP + phosphate + H(+). Functionally, the RuvA-RuvB-RuvC complex processes Holliday junction (HJ) DNA during genetic recombination and DNA repair, while the RuvA-RuvB complex plays an important role in the rescue of blocked DNA replication forks via replication fork reversal (RFR). RuvA specifically binds to HJ cruciform DNA, conferring on it an open structure. The RuvB hexamer acts as an ATP-dependent pump, pulling dsDNA into and through the RuvAB complex. RuvB forms 2 homohexamers on either side of HJ DNA bound by 1 or 2 RuvA tetramers; 4 subunits per hexamer contact DNA at a time. Coordinated motions by a converter formed by DNA-disengaged RuvB subunits stimulates ATP hydrolysis and nucleotide exchange. Immobilization of the converter enables RuvB to convert the ATP-contained energy into a lever motion, pulling 2 nucleotides of DNA out of the RuvA tetramer per ATP hydrolyzed, thus driving DNA branch migration. The RuvB motors rotate together with the DNA substrate, which together with the progressing nucleotide cycle form the mechanistic basis for DNA recombination by continuous HJ branch migration. Branch migration allows RuvC to scan DNA until it finds its consensus sequence, where it cleaves and resolves cruciform DNA. The protein is Holliday junction branch migration complex subunit RuvB of Lactiplantibacillus plantarum (strain ATCC BAA-793 / NCIMB 8826 / WCFS1) (Lactobacillus plantarum).